The primary structure comprises 199 residues: MTYALPELDYAYDALEPHIAAEIMELHHSKHHANYVNGANAALEKLQKARENGEIGAVVTALSKDLAFNLGGHTNHSIFWKNLSPNGGGEPTGALAEAIAKEFGSFEKFKDHFSAAALGLQGSGWAVLGYDHIGGRLVIEQLTDQQGNISANLTPLLMLDMWEHAFYLQYKNVKADYVKAVWNVFNWDDVAARFEAATK.

Positions 27, 76, 160, and 164 each coordinate Mn(2+).

This sequence belongs to the iron/manganese superoxide dismutase family. Mn(2+) serves as cofactor.

The catalysed reaction is 2 superoxide + 2 H(+) = H2O2 + O2. Its function is as follows. Destroys superoxide anion radicals which are normally produced within the cells and which are toxic to biological systems. This is Superoxide dismutase [Mn] (sodA) from Corynebacterium diphtheriae (strain ATCC 700971 / NCTC 13129 / Biotype gravis).